Consider the following 458-residue polypeptide: Kelch repeat and BTB domain-containing protein 13 (458 aa).

The BTB domain maps to 7 to 74; that stretch reads TLVQVWVGGQ…LRGDRPALAA (68 aa). Kelch repeat units follow at residues 159 to 209, 210 to 258, 259 to 305, 307 to 350, and 352 to 400; these read AVST…TLGN, KLYI…GFDG, RLYA…QACG, LFVC…VAHR, and SLYV…VVRG.

As to quaternary structure, component of the BCR(KBTBD13) E3 ubiquitin ligase complex, at least composed of CUL3 and KBTBD13 and RBX1. Interacts with CUL3. Autoubiquitinated. As to expression, expressed in skeletal muscle.

The protein resides in the cytoplasm. It participates in protein modification; protein ubiquitination. Substrate-specific adapter of a BCR (BTB-CUL3-RBX1) E3 ubiquitin ligase complex. This is Kelch repeat and BTB domain-containing protein 13 (KBTBD13) from Homo sapiens (Human).